The sequence spans 128 residues: Large ribosomal subunit protein bL20 (128 aa).

Belongs to the bacterial ribosomal protein bL20 family.

Binds directly to 23S ribosomal RNA and is necessary for the in vitro assembly process of the 50S ribosomal subunit. It is not involved in the protein synthesizing functions of that subunit. The polypeptide is Large ribosomal subunit protein bL20 (Corynebacterium efficiens (strain DSM 44549 / YS-314 / AJ 12310 / JCM 11189 / NBRC 100395)).